The following is a 211-amino-acid chain: Urease accessory protein UreG (211 aa).

8 to 15 (GPVGSGKT) is a binding site for GTP.

Belongs to the SIMIBI class G3E GTPase family. UreG subfamily. As to quaternary structure, homodimer. UreD, UreF and UreG form a complex that acts as a GTP-hydrolysis-dependent molecular chaperone, activating the urease apoprotein by helping to assemble the nickel containing metallocenter of UreC. The UreE protein probably delivers the nickel.

The protein localises to the cytoplasm. Functionally, facilitates the functional incorporation of the urease nickel metallocenter. This process requires GTP hydrolysis, probably effectuated by UreG. The protein is Urease accessory protein UreG of Metallosphaera sedula (strain ATCC 51363 / DSM 5348 / JCM 9185 / NBRC 15509 / TH2).